Reading from the N-terminus, the 148-residue chain is 3-dehydroquinate dehydratase (148 aa).

The substrate site is built by N74, H80, and D87. H100 (proton donor) is an active-site residue. Residues 101-102 (LS) and R111 contribute to the substrate site.

This sequence belongs to the type-II 3-dehydroquinase family. As to quaternary structure, homododecamer.

It catalyses the reaction 3-dehydroquinate = 3-dehydroshikimate + H2O. It functions in the pathway metabolic intermediate biosynthesis; chorismate biosynthesis; chorismate from D-erythrose 4-phosphate and phosphoenolpyruvate: step 3/7. This is 3-dehydroquinate dehydratase (yqhS) from Bacillus subtilis (strain 168).